The following is a 752-amino-acid chain: Two pore channel protein 2 (752 aa).

Residues 1–84 lie on the Cytoplasmic side of the membrane; sequence MAEPQAESEP…RRYYSNVCQR (84 aa). A helical membrane pass occupies residues 85–105; that stretch reads TLSFTIFLILFLAFIETPSSL. At 106–127 the chain is on the extracellular side; that stretch reads TSTADVRYRAAPWEPPCGLTES. Residues 128–148 traverse the membrane as a helical segment; it reads VEVLCLLVFAADLSVKGYLFG. The Cytoplasmic portion of the chain corresponds to 149 to 155; the sequence is WAHFQKN. The helical transmembrane segment at 156–176 threads the bilayer; sequence LWLLGYLVVLVVSLVDWTVSL. At 177–183 the chain is on the extracellular side; the sequence is SLVCHEP. The chain crosses the membrane as a helical span at residues 184–204; the sequence is LRIRRLLRPFFLLQNSSMMKK. The interval 203 to 207 is interaction with phosphatidylinositol 3,5-bisphosphate; the sequence is KKTLK. Topologically, residues 205–218 are cytoplasmic; it reads TLKCIRWSLPEMAS. The helical transmembrane segment at 219 to 239 threads the bilayer; the sequence is VGLLLAIHLCLFTMFGMLLFA. Topologically, residues 240–254 are extracellular; that stretch reads GGKQDDGQDRERLTY. Residues 255-279 constitute an intramembrane region (helical; Pore-forming); that stretch reads FQNLPESLTSLLVLLTTANNPDVMI. Over 280-289 the chain is Extracellular; it reads PAYSKNRAYA. Residues 290 to 310 traverse the membrane as a helical segment; it reads IFFIVFTVIGSLFLMNLLTAI. The Cytoplasmic portion of the chain corresponds to 311-436; sequence IYSQFRGYLM…FLFGHYYFDY (126 aa). Residues 437 to 459 form a helical membrane-spanning segment; that stretch reads LGNLIALANLVSICVFLVLDADV. Over 460 to 465 the chain is Extracellular; it reads LPAERD. A helical transmembrane segment spans residues 466-486; that stretch reads DFILGILNCVFIVYYLLEMLL. Topologically, residues 487–502 are cytoplasmic; it reads KVFALGLRGYLSYPSN. The helical transmembrane segment at 503–523 threads the bilayer; the sequence is VFDGLLTVVLLVLEISTLAVY. Topologically, residues 524–554 are extracellular; it reads RLPHPGWRPEMVGLLSLWDMTRMLNMLIVFR. The helical transmembrane segment at 555-575 threads the bilayer; sequence FLRIIPSMKLMAVVASTVLGL. Topologically, residues 576–580 are cytoplasmic; that stretch reads VQNMR. The helical transmembrane segment at 581-601 threads the bilayer; it reads AFGGILVVVYYVFAIIGINLF. Residues 602–635 are Extracellular-facing; sequence RGVIVALPGNSSLAPANGSAPCGSFEQLEYWANN. N-linked (GlcNAc...) asparagine glycosylation is found at Asn611 and Asn618. Residues 636–658 constitute an intramembrane region (helical; Pore-forming); the sequence is FDDFAAALVTLWNLMVVNNWQVF. The Extracellular portion of the chain corresponds to 659-673; that stretch reads LDAYRRYSGPWSKIY. Residues 674 to 694 form a helical membrane-spanning segment; it reads FVLWWLVSSVIWVNLFLALIL. The Cytoplasmic segment spans residues 695-752; sequence ENFLHKWDPRSHLQPLAGTPEATYQMTVELLFRDILEEPGEDELTERLSQHPHLWLCR.

Belongs to the calcium channel alpha-1 subunit (TC 1.A.1.11) family. Two pore calcium channel subfamily. As to quaternary structure, homodimer. Interacts with LRRK2. Interacts with HAX1. Interacts with MTOR; the interaction is required for TPCN2 ATP sensitivity. Found in a complex with LSM12, TPCN1 and TPCN2. Interacts with LSM12. In terms of processing, N-glycosylated. Widely expressed. Expressed at high level in liver and kidney.

It is found in the late endosome membrane. Its subcellular location is the lysosome membrane. The protein localises to the melanosome membrane. It carries out the reaction Na(+)(in) = Na(+)(out). The enzyme catalyses Ca(2+)(in) = Ca(2+)(out). With respect to regulation, regulated by Mg(2+) ions, cytosolic Mg(2+) selectively inhibits outward current while lysosomal Mg(2+) modestly inhibits both the outward and inward currents. In the absence of Mg(2+), NAADP readily activates TPCN2, with properties similar to PI(3,5)P2. Na(+) current is inhibited by ATP in a MTORC-dependent manner. ATP sensitivity is independent of PI(3,5)P2. Both current elicited by PI(3,5)P2 as well as NAADP are inhibited by tetrandrine. Its function is as follows. Intracellular channel initially characterized as a non-selective Ca(2+)-permeable channel activated by NAADP (nicotinic acid adenine dinucleotide phosphate), it is also a highly-selective Na(+) channel activated directly by PI(3,5)P2 (phosphatidylinositol 3,5-bisphosphate). Localizes to the lysosomal and late endosome membranes where it regulates organellar membrane excitability, membrane trafficking, and pH homeostasis. Is associated with a plethora of physiological processes, including mTOR-dependent nutrient sensing, skin pigmentation and autophagy. Ion selectivity is not fixed but rather agonist-dependent and under defined ionic conditions, can be readily activated by both NAADP and PI(3,5)P2. As calcium channel, it increases the pH in the lysosomal lumen, as sodium channel, it promotes lysosomal exocytosis. Plays a crucial role in endolysosomal trafficking in the endolysosomal degradation pathway and is potentially involved in the homeostatic control of many macromolecules and cell metabolites. Also expressed in melanosomes of pigmented cells where mediates a Ca(2+) channel and/or PI(3,5)P2-activated melanosomal Na(+) channel to acidify pH and inhibit tyrosinase activity required for melanogenesis and pigmentation. Unlike the voltage-dependent TPCN1, TPCN2 is voltage independent and can be activated solely by PI(3,5)P2 binding. In contrast, PI(4,5)P2, PI(3,4)P2, PI(3)P and PI(5)P have no obvious effect on channel activation. In terms of biological role, (Microbial infection) During Ebola virus (EBOV) infection, controls the movement of endosomes containing virus particles and is required by EBOV to escape from the endosomal network into the cell cytoplasm. Functionally, (Microbial infection) Required for cell entry of coronaviruses SARS-CoV and SARS-CoV-2, as well as human coronavirus EMC (HCoV-EMC), by endocytosis. The polypeptide is Two pore channel protein 2 (Homo sapiens (Human)).